We begin with the raw amino-acid sequence, 592 residues long: Outer spore wall assembly protein SHE10 (592 aa).

Positions 1 to 23 (MRFFKRFLLTLTVFIYTLRYLHC) are cleaved as a signal peptide. 2 coiled-coil regions span residues 354-385 (ENNISTNLTNTIDELDKNIQEIHEHHVELYEE) and 448-583 (LNQF…KQMG). The segment covering 507–580 (QSEQEERIKS…EVRKQEEARK (74 aa)) has biased composition (basic and acidic residues). Residues 507–592 (QSEQEERIKS…GSPPPPQQQQ (86 aa)) are disordered.

It belongs to the SHE10 family. As to quaternary structure, component of the mitochondria-localized RNase mitochondrial RNA-processing (RNase MRP) composed of one single RNA encoded by the NME1 gene and at least 31 proteins. Absent in the nucleus-localized RNase MRP (NuMRP).

The protein localises to the mitochondrion. In terms of biological role, involved in spore wall assembly. May be a component of the mitochondrial RNase MRP (MtMRP), a ribonucleoprotein endoribonuclease involved in the cleaving RNA transcripts to generate primers for DNA replication in mitochondria. In Vanderwaltozyma polyspora (strain ATCC 22028 / DSM 70294 / BCRC 21397 / CBS 2163 / NBRC 10782 / NRRL Y-8283 / UCD 57-17) (Kluyveromyces polysporus), this protein is Outer spore wall assembly protein SHE10.